We begin with the raw amino-acid sequence, 308 residues long: Glutathione synthetase (308 aa).

In terms of domain architecture, ATP-grasp spans 120-304 (KLGALRFNNL…LADQVIARLL (185 aa)). Residue 146-202 (AREQEEVVLKPLGGRAGQGLVRVAGAAPGLEALLELVTDQEQLPVMVQRFLPAVIEG) coordinates ATP. Mg(2+)-binding residues include E275 and N277.

This sequence belongs to the prokaryotic GSH synthase family. It depends on Mg(2+) as a cofactor. Mn(2+) serves as cofactor.

It carries out the reaction gamma-L-glutamyl-L-cysteine + glycine + ATP = glutathione + ADP + phosphate + H(+). The protein operates within sulfur metabolism; glutathione biosynthesis; glutathione from L-cysteine and L-glutamate: step 2/2. This Prochlorococcus marinus (strain MIT 9313) protein is Glutathione synthetase.